The sequence spans 1052 residues: Mitotic checkpoint serine/threonine-protein kinase BUB1 beta (1052 aa).

The region spanning 56-219 (FESEIRFYSG…LEPSEPQRSS (164 aa)) is the BUB1 N-terminal domain. Residues 105–112 (GETRYYND) carry the Nuclear localization signal motif. The tract at residues 146–179 (AQFYISWAEEYEARENFKKADIIFQEGIERKAEP) is necessary for interaction with KNL1. 2 disordered regions span residues 206–256 (EEEA…NAVP) and 272–327 (ADTA…TSIP). Positions 217–225 (RSSLAELKS) match the D-box motif. N6-acetyllysine; by PCAF is present on Lys-243. A Phosphoserine modification is found at Ser-360. Residues 361-381 (TRKPGREEGDPLQRVQSHQQG) are disordered. Ser-428 bears the Phosphoserine mark. A disordered region spans residues 496-552 (SNPREISPAENILQEQPDSKGSSMPFSIFDESLSDKKDKSPATGGPQVLNAQRRPLS). Polar residues predominate over residues 508–520 (LQEQPDSKGSSMP). 2 positions are modified to phosphoserine: Ser-535 and Ser-659. Ser-665 bears the Phosphoserine; by PLK1 mark. Ser-686 carries the phosphoserine modification. Residues 756–1040 (VIKQEHLTCD…TISPEALLTQ (285 aa)) form the Protein kinase domain. 762–770 (LTCDDYRLF) serves as a coordination point for ATP. Phosphothreonine; by PLK1 is present on Thr-781. Lys-784 provides a ligand contact to ATP. Asp-871 (proton acceptor) is an active-site residue. Thr-998 is modified (phosphothreonine; by PLK1). Ser-1033 and Ser-1050 each carry phosphoserine.

It belongs to the protein kinase superfamily. Ser/Thr protein kinase family. BUB1 subfamily. In terms of assembly, interacts with CENPE. Interacts with PLK1. Part of a complex containing BUB3, CDC20 and BUB1B. Interacts with anaphase-promoting complex/cyclosome (APC/C). Interacts with KNL1. Interacts with KAT2B. Interacts with RIPK3. Interacts with the closed conformation form of MAD2L1. Interacts with CDC20. Post-translationally, proteolytically cleaved by caspase-3 in a cell cycle specific manner. The cleavage might be involved in the durability of the cell cycle delay. In terms of processing, acetylation at Lys-243 regulates its degradation and timing in anaphase entry. Ubiquitinated. Degraded by the proteasome. Ubiquitinated by UBR5, promoting disassembly of the mitotic checkpoint complex from the APC/C complex. Post-translationally, sumoylated with SUMO2 and SUMO3. The sumoylation mediates the association with CENPE at the kinetochore. In terms of processing, autophosphorylated in vitro. Intramolecular autophosphorylation stimulated by CENPE. Phosphorylated during mitosis and hyperphosphorylated in mitotically arrested cells. Phosphorylation at Ser-659 and Ser-1033 occurs at kinetochores upon mitotic entry with dephosphorylation at the onset of anaphase. Proteolytically cleaved by caspase-3 in a cell cycle specific manner. The cleavage might be involved in the durability of the cell cycle delay. Caspase-3 cleavage is associated with abrogation of the mitotic checkpoint. The major site of cleavage is at Asp-603. In terms of tissue distribution, highly expressed in thymus followed by spleen.

The protein localises to the cytoplasm. The protein resides in the nucleus. It is found in the chromosome. Its subcellular location is the centromere. It localises to the kinetochore. The enzyme catalyses L-seryl-[protein] + ATP = O-phospho-L-seryl-[protein] + ADP + H(+). It catalyses the reaction L-threonyl-[protein] + ATP = O-phospho-L-threonyl-[protein] + ADP + H(+). Kinase activity stimulated by CENPE. In terms of biological role, essential component of the mitotic checkpoint. Required for normal mitosis progression and tumor suppression. The mitotic checkpoint delays anaphase until all chromosomes are properly attached to the mitotic spindle. One of its checkpoint functions is to inhibit the activity of the anaphase-promoting complex/cyclosome (APC/C) by blocking the binding of CDC20 to APC/C, independently of its kinase activity. The other is to monitor kinetochore activities that depend on the kinetochore motor CENPE. Required for kinetochore localization of CENPE. Negatively regulates PLK1 activity in interphase cells and suppresses centrosome amplification. Also implicated in triggering apoptosis in polyploid cells that exit aberrantly from mitotic arrest. Essential for tumor suppression. May play a role in regulating aging and fertility. The polypeptide is Mitotic checkpoint serine/threonine-protein kinase BUB1 beta (Bub1b) (Mus musculus (Mouse)).